The primary structure comprises 206 residues: Probable nicotinate-nucleotide adenylyltransferase (206 aa).

The protein belongs to the NadD family.

The catalysed reaction is nicotinate beta-D-ribonucleotide + ATP + H(+) = deamido-NAD(+) + diphosphate. The protein operates within cofactor biosynthesis; NAD(+) biosynthesis; deamido-NAD(+) from nicotinate D-ribonucleotide: step 1/1. In terms of biological role, catalyzes the reversible adenylation of nicotinate mononucleotide (NaMN) to nicotinic acid adenine dinucleotide (NaAD). In Paenarthrobacter aurescens (strain TC1), this protein is Probable nicotinate-nucleotide adenylyltransferase.